The primary structure comprises 579 residues: Altered inheritance of mitochondria protein 9, mitochondrial (579 aa).

Residues Met-1–Phe-36 constitute a mitochondrion transit peptide.

The protein belongs to the AIM9 family.

Its subcellular location is the mitochondrion. The chain is Altered inheritance of mitochondria protein 9, mitochondrial (AIM9) from Yarrowia lipolytica (strain CLIB 122 / E 150) (Yeast).